A 156-amino-acid polypeptide reads, in one-letter code: Keratin-associated protein 13-4 (156 aa).

Tandem repeats lie at residues Cys-37–Asn-46, Cys-47–Ser-56, Cys-57–Thr-66, and Cys-73–Gly-82. Residues Cys-37–Gly-82 form a 4 X 10 AA approximate repeats region.

This sequence belongs to the PMG family. As to quaternary structure, interacts with hair keratins.

In terms of biological role, in the hair cortex, hair keratin intermediate filaments are embedded in an interfilamentous matrix, consisting of hair keratin-associated proteins (KRTAP), which are essential for the formation of a rigid and resistant hair shaft through their extensive disulfide bond cross-linking with abundant cysteine residues of hair keratins. The matrix proteins include the high-sulfur and high-glycine-tyrosine keratins. This chain is Keratin-associated protein 13-4 (KRTAP13-4), found in Macaca fascicularis (Crab-eating macaque).